The primary structure comprises 901 residues: Envelope glycoprotein B (901 aa).

The first 34 residues, 1–34, serve as a signal peptide directing secretion; the sequence is MRPVRGIARSRILSCSWRGTWTSALTILYLGVYC. The Virion surface segment spans residues 35–736; it reads ESTTVTPTTV…GALVTFVTNP (702 aa). 3 N-linked (GlcNAc...) asparagine; by host glycosylation sites follow: asparagine 53, asparagine 60, and asparagine 66. Disulfide bonds link cysteine 84-cysteine 533, cysteine 101-cysteine 489, cysteine 174-cysteine 239, and cysteine 331-cysteine 380. Positions 141–147 are involved in fusion and/or binding to host membrane; the sequence is SYKYVTY. N-linked (GlcNAc...) asparagine; by host glycosylation is present at asparagine 197. An involved in fusion and/or binding to host membrane region spans residues 226-233; the sequence is GSVWLYKE. Asparagine 270, asparagine 289, asparagine 328, asparagine 372, asparagine 398, asparagine 406, asparagine 436, asparagine 537, asparagine 571, and asparagine 623 each carry an N-linked (GlcNAc...) asparagine; by host glycan. An intrachain disulfide couples cysteine 559 to cysteine 596. 2 hydrophobic membrane proximal region regions span residues 683 to 734 and 714 to 734; these read VERV…TFVT and AVGA…TFVT. A helical membrane pass occupies residues 737–757; that stretch reads FGAFVVFLFCVGCITLVITVY. At 758–901 the chain is on the intravirion side; it reads RRQRRAMQRP…KLNTEDDVHV (144 aa). Disordered stretches follow at residues 794 to 813 and 852 to 901; these read GPEG…APYG and DDKK…DVHV. Basic and acidic residues-rich tracts occupy residues 852–864 and 872–883; these read DDKK…KSSK and SETRRRPGIMDR. The Internalization motif signature appears at 890–893; the sequence is YQKL.

This sequence belongs to the herpesviridae glycoprotein B family. Homotrimer; disulfide-linked. Binds to heparan sulfate proteoglycans. Interacts with gH/gL heterodimer. Post-translationally, a proteolytic cleavage by host furin generates two subunits that remain linked by disulfide bonds.

The protein localises to the virion membrane. Its subcellular location is the host cell membrane. The protein resides in the host endosome membrane. It localises to the host Golgi apparatus membrane. Its function is as follows. Envelope glycoprotein that forms spikes at the surface of virion envelope. Essential for the initial attachment to heparan sulfate moieties of the host cell surface proteoglycans. Involved in fusion of viral and cellular membranes leading to virus entry into the host cell. Following initial binding to its host receptors, membrane fusion is mediated by the fusion machinery composed at least of gB and the heterodimer gH/gL. May be involved in the fusion between the virion envelope and the outer nuclear membrane during virion egress. This is Envelope glycoprotein B from Guinea pig cytomegalovirus (strain 22122) (GPCMV).